The primary structure comprises 128 residues: MEQWTTEIWFSISIAFLIGTLCGVLVMRFFKGNIQQQIQLKSELASAEAKIEEQKQQLERHFEQSANLLENLAEDYKKLYTHFAQNSEQLLPESNQVEFFKRLKNHANGDEDNQPRDYSDGSSGLLKS.

The helical transmembrane segment at 7-27 (EIWFSISIAFLIGTLCGVLVM) threads the bilayer. The stretch at 37 to 75 (QIQLKSELASAEAKIEEQKQQLERHFEQSANLLENLAED) forms a coiled coil. The tract at residues 105-128 (NHANGDEDNQPRDYSDGSSGLLKS) is disordered. The span at 107 to 119 (ANGDEDNQPRDYS) shows a compositional bias: basic and acidic residues.

The protein belongs to the ZapG family. As to quaternary structure, homotetramer. In solution, is primarily monomeric but forms small amounts of stable tetramer and hexadecamer. The crystal structure of the cytosolic region shows a coiled-coil tetramer in the asymmetric unit that is very likely to be a physiologically relevant assembly of the protein.

It localises to the cell inner membrane. Involved in cell division, cell envelope biogenesis and cell shape maintenance. The sequence is that of Z-ring associated protein G from Haemophilus ducreyi (strain 35000HP / ATCC 700724).